Consider the following 427-residue polypeptide: Gamma-glutamyl phosphate reductase (427 aa).

This sequence belongs to the gamma-glutamyl phosphate reductase family.

Its subcellular location is the cytoplasm. It catalyses the reaction L-glutamate 5-semialdehyde + phosphate + NADP(+) = L-glutamyl 5-phosphate + NADPH + H(+). It participates in amino-acid biosynthesis; L-proline biosynthesis; L-glutamate 5-semialdehyde from L-glutamate: step 2/2. Its function is as follows. Catalyzes the NADPH-dependent reduction of L-glutamate 5-phosphate into L-glutamate 5-semialdehyde and phosphate. The product spontaneously undergoes cyclization to form 1-pyrroline-5-carboxylate. This chain is Gamma-glutamyl phosphate reductase, found in Brucella anthropi (strain ATCC 49188 / DSM 6882 / CCUG 24695 / JCM 21032 / LMG 3331 / NBRC 15819 / NCTC 12168 / Alc 37) (Ochrobactrum anthropi).